The primary structure comprises 118 residues: NADH-quinone oxidoreductase subunit A (118 aa).

A run of 3 helical transmembrane segments spans residues isoleucine 8 to phenylalanine 28, alanine 64 to phenylalanine 84, and valine 87 to leucine 107.

It belongs to the complex I subunit 3 family. As to quaternary structure, NDH-1 is composed of 14 different subunits. Subunits NuoA, H, J, K, L, M, N constitute the membrane sector of the complex.

Its subcellular location is the cell membrane. The enzyme catalyses a quinone + NADH + 5 H(+)(in) = a quinol + NAD(+) + 4 H(+)(out). NDH-1 shuttles electrons from NADH, via FMN and iron-sulfur (Fe-S) centers, to quinones in the respiratory chain. The immediate electron acceptor for the enzyme in this species is believed to be ubiquinone. Couples the redox reaction to proton translocation (for every two electrons transferred, four hydrogen ions are translocated across the cytoplasmic membrane), and thus conserves the redox energy in a proton gradient. In Chloroflexus aurantiacus (strain ATCC 29366 / DSM 635 / J-10-fl), this protein is NADH-quinone oxidoreductase subunit A.